Reading from the N-terminus, the 290-residue chain is Urease accessory protein UreD (290 aa).

Belongs to the UreD family. In terms of assembly, ureD, UreF and UreG form a complex that acts as a GTP-hydrolysis-dependent molecular chaperone, activating the urease apoprotein by helping to assemble the nickel containing metallocenter of UreC. The UreE protein probably delivers the nickel.

The protein resides in the cytoplasm. In terms of biological role, required for maturation of urease via the functional incorporation of the urease nickel metallocenter. The sequence is that of Urease accessory protein UreD from Paenarthrobacter aurescens (strain TC1).